The sequence spans 98 residues: NADH-ubiquinone oxidoreductase chain 4L (98 aa).

3 helical membrane-spanning segments follow: residues 1–21, 31–51, and 61–81; these read MSLT…GLLM, LCLE…VLTI, and IILL…LVVV.

Belongs to the complex I subunit 4L family. In terms of assembly, core subunit of respiratory chain NADH dehydrogenase (Complex I) which is composed of 45 different subunits.

Its subcellular location is the mitochondrion inner membrane. It catalyses the reaction a ubiquinone + NADH + 5 H(+)(in) = a ubiquinol + NAD(+) + 4 H(+)(out). Its function is as follows. Core subunit of the mitochondrial membrane respiratory chain NADH dehydrogenase (Complex I) which catalyzes electron transfer from NADH through the respiratory chain, using ubiquinone as an electron acceptor. Part of the enzyme membrane arm which is embedded in the lipid bilayer and involved in proton translocation. This is NADH-ubiquinone oxidoreductase chain 4L (MT-ND4L) from Chalinolobus tuberculatus (New Zealand long-tailed bat).